The chain runs to 450 residues: Thiamine biosynthesis regulatory protein (450 aa).

Over residues 1–12 (MVNSKRQQRSKK) the composition is skewed to basic residues. A disordered region spans residues 1–23 (MVNSKRQQRSKKVASSSKVPPTK). Low complexity predominate over residues 13–23 (VASSSKVPPTK). The segment at residues 30–57 (CWACRFKKRRCDENRPICSLCAKHGDNC) is a DNA-binding region (zn(2)-C6 fungal-type). The interval 210 to 234 (TDQLPSPGHSMSSAEETTTAALSSP) is disordered.

The protein localises to the nucleus. Positive regulator of thiamine biosynthesis. The polypeptide is Thiamine biosynthesis regulatory protein (THI2) (Saccharomyces cerevisiae (strain ATCC 204508 / S288c) (Baker's yeast)).